A 2176-amino-acid chain; its full sequence is Protein eyes shut (2176 aa).

The Cytoplasmic segment spans residues 1-122 (MSNVHQFDTQ…NPNILLPTLR (122 aa)). Residues 123–143 (ILARGLLLPALILAILVGSSQ) traverse the membrane as a helical segment. The EGF-like 1 domain occupies 144–180 (AGFACLSNPCVFGVCIDGLNSSYSCYCIDGYTGIQCQ). Residues 144-2176 (AGFACLSNPC…DLHGDEPLTV (2033 aa)) are Extracellular-facing. Cystine bridges form between Cys-148–Cys-158, Cys-153–Cys-168, Cys-170–Cys-179, Cys-186–Cys-197, Cys-191–Cys-206, Cys-208–Cys-217, Cys-224–Cys-235, Cys-229–Cys-244, Cys-246–Cys-255, Cys-262–Cys-276, Cys-270–Cys-286, Cys-288–Cys-297, Cys-304–Cys-315, Cys-309–Cys-324, Cys-326–Cys-335, Cys-342–Cys-353, Cys-347–Cys-362, Cys-364–Cys-373, Cys-380–Cys-392, Cys-386–Cys-401, and Cys-403–Cys-412. N-linked (GlcNAc...) asparagine glycosylation occurs at Asn-163. The region spanning 182–218 (NWDECWSSPCQNGGTCVDGVAYYNCTCPEGFSGSNCE) is the EGF-like 2; calcium-binding domain. Asn-205 is a glycosylation site (N-linked (GlcNAc...) asparagine). Residues 220–256 (NVDECMSNPCQNGGLCRDRTNGYICTCQPGYLGSHCE) enclose the EGF-like 3; calcium-binding domain. The EGF-like 4 domain occupies 258-298 (DVAVCETGTGARCQHGGECIEGPGLEFTCDCPAGWHGRICQ). Residues 300–336 (EINECASSPCQNGGVCVDKLAAYACACPMGYTGINCE) form the EGF-like 5; calcium-binding domain. In terms of domain architecture, EGF-like 6 spans 338–374 (EILICADNPCQNNALCLMEEGVPTCYCVPDYHGEKCE). The 38-residue stretch at 376–413 (QYDECQLGPRCMNGGVCIDGVDTFSCSCPPLLTGMLCE) folds into the EGF-like 7; calcium-binding domain. Asn-425 carries N-linked (GlcNAc...) asparagine glycosylation. Low complexity-rich tracts occupy residues 429–447 (PATQ…MAPP) and 482–502 (VTSV…VSVE). Disordered regions lie at residues 429 to 465 (PATQ…SRAS), 482 to 639 (VTSV…RPTA), 757 to 783 (RFTT…LPTP), 802 to 854 (LITT…VEIT), and 902 to 1014 (APPA…GVPE). A compositionally biased stretch (polar residues) spans 514-526 (GSHSISVEQTTAV). A compositionally biased stretch (acidic residues) spans 548 to 560 (SASESETETEEEI). 2 stretches are compositionally biased toward low complexity: residues 564 to 582 (TTAR…ESPS) and 596 to 632 (TSAS…SEEV). The segment covering 757-775 (RFTTVQPPAGVTTTSPTED) has biased composition (polar residues). Residues 811–820 (THHHHHHHPH) are compositionally biased toward basic residues. 2 stretches are compositionally biased toward pro residues: residues 904–922 (PATP…PSPP) and 930–955 (TLPP…PTPP). Residues 1018-1054 (GDVDCIKLGCYNGGTCVTTSEGSRCVCRFDRQGPLCE) enclose the EGF-like 8 domain. Intrachain disulfides connect Cys-1022–Cys-1033, Cys-1027–Cys-1042, and Cys-1044–Cys-1053. Residues 1059–1266 (IRNAAFSGDS…GITECGSLAC (208 aa)) enclose the Laminin G-like 1 domain. Asn-1165, Asn-1170, and Asn-1176 each carry an N-linked (GlcNAc...) asparagine glycan. In terms of domain architecture, EGF-like 9 spans 1309 to 1346 (EISVCEDNPCQYGGTCVQFPGSGYLCLCPLGKHGHYCE). 3 cysteine pairs are disulfide-bonded: Cys-1313–Cys-1324, Cys-1318–Cys-1334, and Cys-1336–Cys-1345. The 197-residue stretch at 1353-1549 (LPSFSGSVNG…GVGQCGTREC (197 aa)) folds into the Laminin G-like 2 domain. N-linked (GlcNAc...) asparagine glycosylation occurs at Asn-1471. EGF-like domains follow at residues 1545-1581 (GTRE…PLCA) and 1583-1621 (PTNP…KNCE). Intrachain disulfides connect Cys-1549/Cys-1560, Cys-1554/Cys-1569, Cys-1571/Cys-1580, Cys-1587/Cys-1600, Cys-1594/Cys-1609, and Cys-1611/Cys-1620. N-linked (GlcNAc...) asparagine glycans are attached at residues Asn-1665 and Asn-1861. Residues 1692 to 1879 (EKQRSFSPVP…NIRDCDGTAC (188 aa)) enclose the Laminin G-like 3 domain. EGF-like domains follow at residues 1875-1912 (DGTA…DRCE) and 1913-1946 (YSET…FYCE). 6 disulfides stabilise this stretch: Cys-1879-Cys-1890, Cys-1884-Cys-1900, Cys-1902-Cys-1911, Cys-1917-Cys-1928, Cys-1922-Cys-1934, and Cys-1936-Cys-1945. Positions 1952–2166 (PTTPSFRGNS…TYQGENIGSC (215 aa)) constitute a Laminin G-like 4 domain. Asn-1994, Asn-2035, and Asn-2099 each carry an N-linked (GlcNAc...) asparagine glycan. The tract at residues 2080 to 2101 (GGRSLGSTTPRSTLAGRRKNSS) is disordered.

It belongs to the EYS family. As to expression, expressed from the beginning of rhabdomere biogenesis (48 hours after pupal formation), when it decorates the entire photoreceptor apical surface.

Its subcellular location is the membrane. It localises to the secreted. Essential for the formation of matrix-filled interrhabdomeral space: critical for the formation of epithelial lumina in the retina. Acts together with prominin (prom) and the cell adhesion molecule chaoptin (chp) to choreograph the partitioning of rhabdomeres into an open system. In Drosophila melanogaster (Fruit fly), this protein is Protein eyes shut.